Reading from the N-terminus, the 270-residue chain is Undecaprenyl-diphosphatase (270 aa).

The next 7 membrane-spanning stretches (helical) occupy residues 3 to 23 (TIVTAILLGIVEGLTEFLPVS), 42 to 62 (WAMFNVVIQLGAILAVVVQYW), 86 to 106 (LLAAFIPSAILGLALKKYIDV), 108 to 128 (LGSPSVVCWALIAGGIAILVI), 184 to 204 (AEFSFFLAIPTMLGATTLELL), 217 to 237 (VGWSEIGVGFAVSFVVALAVI), and 249 to 269 (FKPFAWYRIAAGAVALGWLAM).

This sequence belongs to the UppP family.

Its subcellular location is the cell inner membrane. The enzyme catalyses di-trans,octa-cis-undecaprenyl diphosphate + H2O = di-trans,octa-cis-undecaprenyl phosphate + phosphate + H(+). Its function is as follows. Catalyzes the dephosphorylation of undecaprenyl diphosphate (UPP). Confers resistance to bacitracin. This is Undecaprenyl-diphosphatase from Novosphingobium aromaticivorans (strain ATCC 700278 / DSM 12444 / CCUG 56034 / CIP 105152 / NBRC 16084 / F199).